Consider the following 717-residue polypeptide: MNKRFFPTLLLAFVCSTLAYADGGMWLMQQINGQVARMKSLGMQLEAADIYNPNGSSLKDAVVMFDGGCTGVLVSNQGLLLTNHHCGYDQIQKHSSVQHNYLKDGFWSYSLAEELVNPGLEVEIVDEITDVTAAVKKELERIKKPSGLEFLSPRYLSSLAPEIVGKKAASRPGYRYEIKAFYGGNRYYMFTKKVFRDVRLVAAPPSSIGKFGSDTDNWAWPRHTGDFSIFRLYADKNGNPAEYSKDNVPYRPKRWVKVNAQGVKEGDFALIMGYPGTTYKFFTADEVTEWSEIDNNIRIEMRGILQDVMLREMLADPKINIMYAAKYASSQNGYKRAQGANWAIRRRSLREIKLAQQQEVLAWAKQKGIATTEEAVRAISKAIEGRQDLRMRQRYLLEGILMGIEMSNAPAADSDIADHWDDPARREAGLQSIRKQFEAFFNKDYSPEVEKDQLAIALLTRYAERIPAEKQPISIREGIAEYGSAKAYVEMIFDKSIYASRERFEEFMKNPDRDRLLRDPMSRFAASVAYEHQKLAKEVAAFDAPLAAAQRSYVASVLDMKGQPNLAPDANLTLRFTYGEIKGYQPRDVVTYGAKSTLEGVMEKEDPNNWEYVVDPKLKALYEAKNYGRYANSDGSMPVNFCATTHTTGGNSGSPVMNARGELIGLNFDRNWEGVGGDIEYLPNYQRSIILDIRYLLFIIDKFAGCQRLIDEIQPQF.

The signal sequence occupies residues M1–A21. Catalysis depends on charge relay system residues H85, D226, and S652.

It belongs to the peptidase S46 family.

The protein localises to the secreted. It is found in the cell surface. Enzyme activity is completely blocked by diisopropyl-fluorophosphates, moderately by phenylmethylsulfonyl fluoride (PMSF) and 4-(2-methyl)benzenesulfonyl fluoride, and slightly by pepstatin in vitro. In terms of biological role, catalyzes the removal of dipeptides from the N-terminus of oligopeptides. Shows a strict specificity for acidic residues (Asp or Glu) in the P1 position, and has a hydrophobic residue preference at the P2 position. Is likely involved in amino acid metabolism and bacterial growth/survival of asaccharolytic P.endodontalis, that utilizes amino acids from extracellular proteinaceous nutrients as energy and carbon sources. This Porphyromonas endodontalis (strain ATCC 35406 / DSM 24491 / JCM 8526 / CCUG 16442 / BCRC 14492 / NCTC 13058 / HG 370) (Bacteroides endodontalis) protein is Asp/Glu-specific dipeptidyl-peptidase (dpp11).